A 304-amino-acid polypeptide reads, in one-letter code: Glucose-6-phosphate isomerase (304 aa).

Glu-146 acts as the Proton donor in catalysis. Residue His-177 is part of the active site.

Belongs to the GPI family.

It is found in the cytoplasm. The enzyme catalyses alpha-D-glucose 6-phosphate = beta-D-fructose 6-phosphate. It participates in carbohydrate degradation; glycolysis; D-glyceraldehyde 3-phosphate and glycerone phosphate from D-glucose: step 2/4. This Calanus finmarchicus (Calanus tonsus) protein is Glucose-6-phosphate isomerase (PGI).